An 813-amino-acid chain; its full sequence is Ubiquitin carboxyl-terminal hydrolase 45 (813 aa).

Positions 1–14 (MRVKDPSKDLPEKG) are enriched in basic and acidic residues. Residues 1–27 (MRVKDPSKDLPEKGKRNKRPLLPHDED) form a disordered region. Residues 1–62 (MRVKDPSKDL…AVAESLWSVC (62 aa)) form an interaction with ERCC1 region. Phosphoserine occurs at positions 28 and 29. Residues 36–153 (LTCQHVSYAV…AQIVDFLQKH (118 aa)) form a UBP-type zinc finger. Zn(2+)-binding residues include Cys38, His40, Cys62, Cys65, Cys85, Cys88, Cys93, His101, His105, His114, Cys127, and Cys130. The region spanning 191–812 (KGITNLGNTC…QAYLLFYERI (622 aa)) is the USP domain. Cys200 functions as the Nucleophile in the catalytic mechanism. Basic and acidic residues-rich tracts occupy residues 405-414 (LQETDQDHNK) and 450-466 (WPSE…KNDN). The disordered stretch occupies residues 405 to 552 (LQETDQDHNK…QAKETHGGEE (148 aa)). Residues 472–488 (PASTLSTEASLNESLTD) show a composition bias toward polar residues. Phosphoserine is present on residues Ser507 and Ser525. Positions 521-533 (SRGDSCGHAEQHP) are enriched in basic and acidic residues. The active-site Proton acceptor is His745.

Belongs to the peptidase C19 family. Interacts with ERCC1. The catalytically active form interacts with SPDL1. In terms of tissue distribution, retina.

It is found in the photoreceptor inner segment. The protein localises to the cytoplasm. Its subcellular location is the nucleus. It carries out the reaction Thiol-dependent hydrolysis of ester, thioester, amide, peptide and isopeptide bonds formed by the C-terminal Gly of ubiquitin (a 76-residue protein attached to proteins as an intracellular targeting signal).. Its function is as follows. Catalyzes the deubiquitination of SPDL1. Plays a role in the repair of UV-induced DNA damage via deubiquitination of ERCC1, promoting its recruitment to DNA damage sites. May be involved in the maintenance of photoreceptor function. May play a role in normal retinal development. Plays a role in cell migration. The protein is Ubiquitin carboxyl-terminal hydrolase 45 (Usp45) of Mus musculus (Mouse).